The following is a 388-amino-acid chain: Chorismate synthase (388 aa).

The NADP(+) site is built by Arg39 and Arg45. FMN-binding positions include 130–132, 251–252, Gly296, 311–315, and Arg337; these read RSS, NA, and KPIPT.

It belongs to the chorismate synthase family. As to quaternary structure, homotetramer. Requires FMNH2 as cofactor.

It catalyses the reaction 5-O-(1-carboxyvinyl)-3-phosphoshikimate = chorismate + phosphate. It functions in the pathway metabolic intermediate biosynthesis; chorismate biosynthesis; chorismate from D-erythrose 4-phosphate and phosphoenolpyruvate: step 7/7. Functionally, catalyzes the anti-1,4-elimination of the C-3 phosphate and the C-6 proR hydrogen from 5-enolpyruvylshikimate-3-phosphate (EPSP) to yield chorismate, which is the branch point compound that serves as the starting substrate for the three terminal pathways of aromatic amino acid biosynthesis. This reaction introduces a second double bond into the aromatic ring system. This chain is Chorismate synthase, found in Streptococcus agalactiae serotype Ia (strain ATCC 27591 / A909 / CDC SS700).